Consider the following 866-residue polypeptide: Probable outer membrane usher protein ElfC (866 aa).

Positions 1–35 are cleaved as a signal peptide; it reads MYRTHRQHSLLSSGGVPSFIGGLVVFVSAAFNAQA.

Belongs to the fimbrial export usher family.

The protein resides in the cell outer membrane. Its function is as follows. Part of the elfADCG-ycbUVF fimbrial operon, which promotes adhesion of bacteria to different abiotic surfaces. Could be involved in the export and assembly of the ElfA fimbrial subunits across the outer membrane. The chain is Probable outer membrane usher protein ElfC (elfC) from Escherichia coli (strain K12).